The following is a 605-amino-acid chain: Condensin-2 complex subunit H2 (605 aa).

The residue at position 19 (Thr19) is a Phosphothreonine. 5 positions are modified to phosphoserine: Ser95, Ser200, Ser208, Ser228, and Ser232. The tract at residues 194 to 331 (LEPEGMSPME…PFDSLESKPF (138 aa)) is disordered. Over residues 256–266 (GEDEDAEEAVE) the composition is skewed to acidic residues. Residues Ser282, Ser284, Ser466, and Ser492 each carry the phosphoserine modification.

The protein belongs to the CND2 H2 (condensin-2 subunit 2) family. In terms of assembly, component of the condensin-2 complex, which contains the SMC2 and SMC4 heterodimer, and three non SMC subunits, NCAPG2, NCAPH2 and NCAPD3 that probably regulate the complex.

It localises to the nucleus. It is found in the chromosome. Regulatory subunit of the condensin-2 complex, a complex that seems to provide chromosomes with an additional level of organization and rigidity and in establishing mitotic chromosome architecture. May promote the resolution of double-strand DNA catenanes (intertwines) between sister chromatids. Condensin-mediated compaction likely increases tension in catenated sister chromatids, providing directionality for type II topoisomerase-mediated strand exchanges toward chromatid decatenation. Required for decatenation of chromatin bridges at anaphase. Early in neurogenesis, may play an essential role to ensure accurate mitotic chromosome condensation in neuron stem cells, ultimately affecting neuron pool and cortex size. Seems to have lineage-specific role in T-cell development. This Homo sapiens (Human) protein is Condensin-2 complex subunit H2 (NCAPH2).